The chain runs to 500 residues: DNA double-strand break repair helicase HerA (500 aa).

Residues arginine 142, glycine 151–asparagine 156, and lysine 459–isoleucine 460 each bind ATP.

Belongs to the HerA family. As to quaternary structure, homohexamer. Forms a complex with NurA.

The enzyme catalyses Couples ATP hydrolysis with the unwinding of duplex DNA at the replication fork by translocating in the 5'-3' direction. This creates two antiparallel DNA single strands (ssDNA). The leading ssDNA polymer is the template for DNA polymerase III holoenzyme which synthesizes a continuous strand.. It carries out the reaction ATP + H2O = ADP + phosphate + H(+). It catalyses the reaction Couples ATP hydrolysis with the unwinding of duplex DNA by translocating in the 3'-5' direction.. ATPase activity is stimulated in the presence of linear double-stranded (ds)DNA. Helicase activity requires the presence of NurA. LhrC-Core (Hel112) inhibits the exonuclease activity of the HerA-NurA complex on ss- and dsDNA, has no effect on the nicking activity of NurA. Its function is as follows. Involved in DNA double-strand break (DSB) repair. Probably acts with NurA to stimulate resection of the 5' strand and produce the long 3' single-strand that is required for RadA loading. NurA and HerA together stimulate the end-resection of six nucleotides of a linear DNA substrate. Has DNA-dependent ATPase activity and bidirectional DNA helicase activity. Preferentially binds single stranded (ss)DNA, bubble and semiforked DNA substrate over other DNA molecules tested. Stimulates the exo- but not endonuclease activity of NurA. This Saccharolobus solfataricus (strain ATCC 35092 / DSM 1617 / JCM 11322 / P2) (Sulfolobus solfataricus) protein is DNA double-strand break repair helicase HerA.